The sequence spans 93 residues: Alpha-defensin 5 (93 aa).

A signal peptide spans 1 to 19; it reads MKTFVLLSALVLLAFQVQA. The propeptide occupies 20–58; that stretch reads DPIHKTDEETNTEEQPGEEDQAVSISFGGQEGSALHEEL. 3 disulfide bridges follow: cysteine 64–cysteine 92, cysteine 66–cysteine 81, and cysteine 71–cysteine 91.

The protein belongs to the alpha-defensin family.

Its subcellular location is the secreted. Its function is as follows. Probably contributes to the antimicrobial barrier function of the small bowel mucosa. The polypeptide is Alpha-defensin 5 (Defa5) (Mus musculus (Mouse)).